The following is a 92-amino-acid chain: Small nuclear ribonucleoprotein E (92 aa).

Positions 18 to 92 (INLIFRYLQN…NITLLQSVSN (75 aa)) constitute a Sm domain.

It belongs to the snRNP Sm proteins family. As to quaternary structure, core component of the spliceosomal U1, U2, U4 and U5 small nuclear ribonucleoproteins (snRNPs), the building blocks of the spliceosome. Most spliceosomal snRNPs contain a common set of Sm proteins, snrpb, snrpd1, snrpd2, snrpd3, snrpe, snrpf and snrpg that assemble in a heptameric protein ring on the Sm site of the small nuclear RNA to form the core snRNP. Component of the U1 snRNP. The U1 snRNP is composed of the U1 snRNA and the 7 core Sm proteins snrpb, snrpd1, snrpd2, snrpd3, snrpe, snrpf and snrpg, and at least three U1 snRNP-specific proteins snrnp70/u1-70k, snrpa/u1-a and snrpc/u1-c. Component of the U4/U6-U5 tri-snRNP complex composed of the U4, U6 and U5 snRNAs and at least prpf3, prpf4, prpf6, prpf8, prpf31, snrnp200, txnl4a, snrnp40, snrpb, snrpd1, snrpd2, snrpd3, snrpe, snrpf, snrpg, ddx23, cd2bp2, ppih, snu13, eftud2, sart1 and usp39, plus lsm2, lsm3, lsm4, lsm5, lsm6, lsm7 and lsm8. Component of the U7 snRNP complex, or U7 Sm protein core complex, that is composed of the U7 snRNA and at least lsm10, lsm11, snrpb, snrpd3, snrpe, snrpf and snrpg; the complex does not contain snrpd1 and snrpd2. Component of the minor spliceosome, which splices U12-type introns. Part of the SMN-Sm complex that contains smn1, gemin2/sip1, ddx20/gemin3, gemin4, gemin5, gemin6, gemin7, gemin8, strap/unrip and the Sm proteins snrpb, snrpd1, snrpd2, snrpd3, snrpe, snrpf and snrpg; catalyzes core snRNPs assembly. Forms a 6S pICln-Sm complex composed of clns1a/pICln, snrpd1, snrpd2, snrpe, snrpf and snrpg; ring-like structure where clns1a/pICln mimics additional Sm proteins and which is unable to assemble into the core snRNP.

The protein localises to the cytoplasm. Its subcellular location is the cytosol. It localises to the nucleus. In terms of biological role, plays a role in pre-mRNA splicing as a core component of the spliceosomal U1, U2, U4 and U5 small nuclear ribonucleoproteins (snRNPs), the building blocks of the spliceosome. Component of both the pre-catalytic spliceosome B complex and activated spliceosome C complexes. As a component of the minor spliceosome, involved in the splicing of U12-type introns in pre-mRNAs. As part of the U7 snRNP it is involved in histone 3'-end processing. This chain is Small nuclear ribonucleoprotein E (snrpe), found in Danio rerio (Zebrafish).